Consider the following 173-residue polypeptide: Transmembrane protein 278 (173 aa).

Residues 1-14 show a composition bias toward acidic residues; the sequence is MSEQERETEEDEGV. The interval 1–25 is disordered; it reads MSEQERETEEDEGVASDTAPMLPRR. The next 3 helical transmembrane spans lie at 31–51, 53–73, and 107–127; these read HISV…VLSG, ALVG…LVLL, and AALI…AAAA. The interval 141 to 165 is disordered; it reads DPARTPAPRRPPRSSGDLADGHPDE.

This sequence belongs to the TMEM88 family.

It is found in the membrane. The polypeptide is Transmembrane protein 278 (Tmem278) (Mus musculus (Mouse)).